The sequence spans 244 residues: Phosphoadenosine 5'-phosphosulfate reductase (244 aa).

Residue cysteine 239 is the Nucleophile; cysteine thiosulfonate intermediate of the active site.

This sequence belongs to the PAPS reductase family. CysH subfamily.

It is found in the cytoplasm. The catalysed reaction is [thioredoxin]-disulfide + sulfite + adenosine 3',5'-bisphosphate + 2 H(+) = [thioredoxin]-dithiol + 3'-phosphoadenylyl sulfate. It participates in sulfur metabolism; hydrogen sulfide biosynthesis; sulfite from sulfate: step 3/3. Functionally, catalyzes the formation of sulfite from phosphoadenosine 5'-phosphosulfate (PAPS) using thioredoxin as an electron donor. This Shigella dysenteriae serotype 1 (strain Sd197) protein is Phosphoadenosine 5'-phosphosulfate reductase.